The following is a 451-amino-acid chain: NAC domain containing protein 52 (451 aa).

The interval 1–21 is disordered; that stretch reads MGRESVAVVTAPPSATAPGTA. Residues 27-178 enclose the NAC domain; sequence LAPGFRFHPT…AYVLCRVFHK (152 aa). The DNA-binding element occupies 126-184; sequence LGMKKTLVFHSGRAPDGLRTNWVMHEYRLVEYETEKNGNLVQDAYVLCRVFHKNNIGPP. Disordered stretches follow at residues 255 to 337 and 370 to 400; these read DQQN…TTTT and KKEK…KVND. A compositionally biased stretch (basic and acidic residues) spans 256-270; sequence QQNHHENDLKPEEHN. A coiled-coil region spans residues 272 to 292; that stretch reads NNNYDENEETLKREQMEEEER. The segment covering 318–337 has biased composition (low complexity); it reads ESNNNSSRNTQDHCSSTTTT. A compositionally biased stretch (basic and acidic residues) spans 370–384; it reads KKEKPQQPLRPHKEP. A coiled-coil region spans residues 398-446; sequence VNDLQKEIHQMSVERETFKLEMMSAEAMISILQSRIDALRQENEELKKN.

In terms of assembly, interacts with JMJ14 and NAC050. As to expression, mostly expressed in floral organs, and, at low levels, in other organs.

It is found in the nucleus. Functionally, transcriptional repressor that binds to the motif 5'-(C/T)A(C/A)G-3' in the promoter of target genes. Also binds to the 5'-CTTGNNNNNCAAG-3' consensus sequence in chromatin. Can bind to the mitochondrial dysfunction motif (MDM) present in the upstream regions of mitochondrial dysfunction stimulon (MDS) genes involved in mitochondrial retrograde regulation (MRR). Together with NAC050 and JMJ14, regulates gene expression and flowering time by associating with the histone demethylase JMJ14, probably by the promotion of RNA-mediated gene silencing. Regulates siRNA-dependent post-transcriptional gene silencing (PTGS) through SGS3 expression modulation. Required during pollen development. This Arabidopsis thaliana (Mouse-ear cress) protein is NAC domain containing protein 52.